A 214-amino-acid polypeptide reads, in one-letter code: Pyridoxine/pyridoxamine 5'-phosphate oxidase (214 aa).

Substrate contacts are provided by residues 9 to 12 (RREY) and Lys67. FMN contacts are provided by residues 62 to 67 (RTVLLK), 77 to 78 (YS), Arg83, Lys84, and Gln106. Substrate is bound by residues Tyr124, Arg128, and Ser132. Residues 141 to 142 (QS) and Trp186 each bind FMN. 192-194 (RLH) provides a ligand contact to substrate. Arg196 contacts FMN.

Belongs to the pyridoxamine 5'-phosphate oxidase family. In terms of assembly, homodimer. The cofactor is FMN.

The catalysed reaction is pyridoxamine 5'-phosphate + O2 + H2O = pyridoxal 5'-phosphate + H2O2 + NH4(+). The enzyme catalyses pyridoxine 5'-phosphate + O2 = pyridoxal 5'-phosphate + H2O2. The protein operates within cofactor metabolism; pyridoxal 5'-phosphate salvage; pyridoxal 5'-phosphate from pyridoxamine 5'-phosphate: step 1/1. Its pathway is cofactor metabolism; pyridoxal 5'-phosphate salvage; pyridoxal 5'-phosphate from pyridoxine 5'-phosphate: step 1/1. Functionally, catalyzes the oxidation of either pyridoxine 5'-phosphate (PNP) or pyridoxamine 5'-phosphate (PMP) into pyridoxal 5'-phosphate (PLP). This is Pyridoxine/pyridoxamine 5'-phosphate oxidase from Porphyromonas gingivalis (strain ATCC 33277 / DSM 20709 / CIP 103683 / JCM 12257 / NCTC 11834 / 2561).